The following is a 428-amino-acid chain: Trigger factor (428 aa).

Residues 163–248 enclose the PPIase FKBP-type domain; it reads GDIVDIDFEG…VNDVKVKELP (86 aa).

It belongs to the FKBP-type PPIase family. Tig subfamily.

Its subcellular location is the cytoplasm. The catalysed reaction is [protein]-peptidylproline (omega=180) = [protein]-peptidylproline (omega=0). Its function is as follows. Involved in protein export. Acts as a chaperone by maintaining the newly synthesized protein in an open conformation. Functions as a peptidyl-prolyl cis-trans isomerase. The polypeptide is Trigger factor (Acetivibrio thermocellus (strain ATCC 27405 / DSM 1237 / JCM 9322 / NBRC 103400 / NCIMB 10682 / NRRL B-4536 / VPI 7372) (Clostridium thermocellum)).